The sequence spans 431 residues: Glutamate--tRNA ligase 1 (431 aa).

A 'HIGH' region motif is present at residues proline 6–asparagine 16. The 'KMSKS' region motif lies at lysine 235–arginine 239. Residue lysine 238 coordinates ATP.

This sequence belongs to the class-I aminoacyl-tRNA synthetase family. Glutamate--tRNA ligase type 1 subfamily. In terms of assembly, monomer.

The protein resides in the cytoplasm. It carries out the reaction tRNA(Glu) + L-glutamate + ATP = L-glutamyl-tRNA(Glu) + AMP + diphosphate. Its function is as follows. Catalyzes the attachment of glutamate to tRNA(Glu) in a two-step reaction: glutamate is first activated by ATP to form Glu-AMP and then transferred to the acceptor end of tRNA(Glu). This Campylobacter concisus (strain 13826) protein is Glutamate--tRNA ligase 1.